We begin with the raw amino-acid sequence, 354 residues long: UDP-N-acetylglucosamine--N-acetylmuramyl-(pentapeptide) pyrophosphoryl-undecaprenol N-acetylglucosamine transferase (354 aa).

Residues 11–13 (TAG), Arg-164, Ser-194, and Gln-289 each bind UDP-N-acetyl-alpha-D-glucosamine.

Belongs to the glycosyltransferase 28 family. MurG subfamily.

It is found in the cell membrane. It carries out the reaction di-trans,octa-cis-undecaprenyl diphospho-N-acetyl-alpha-D-muramoyl-L-alanyl-D-glutamyl-meso-2,6-diaminopimeloyl-D-alanyl-D-alanine + UDP-N-acetyl-alpha-D-glucosamine = di-trans,octa-cis-undecaprenyl diphospho-[N-acetyl-alpha-D-glucosaminyl-(1-&gt;4)]-N-acetyl-alpha-D-muramoyl-L-alanyl-D-glutamyl-meso-2,6-diaminopimeloyl-D-alanyl-D-alanine + UDP + H(+). It participates in cell wall biogenesis; peptidoglycan biosynthesis. Cell wall formation. Catalyzes the transfer of a GlcNAc subunit on undecaprenyl-pyrophosphoryl-MurNAc-pentapeptide (lipid intermediate I) to form undecaprenyl-pyrophosphoryl-MurNAc-(pentapeptide)GlcNAc (lipid intermediate II). The sequence is that of UDP-N-acetylglucosamine--N-acetylmuramyl-(pentapeptide) pyrophosphoryl-undecaprenol N-acetylglucosamine transferase from Lachnospira eligens (strain ATCC 27750 / DSM 3376 / VPI C15-48 / C15-B4) (Eubacterium eligens).